We begin with the raw amino-acid sequence, 233 residues long: Large ribosomal subunit protein uL1 (233 aa).

The protein belongs to the universal ribosomal protein uL1 family. In terms of assembly, part of the 50S ribosomal subunit.

Binds directly to 23S rRNA. The L1 stalk is quite mobile in the ribosome, and is involved in E site tRNA release. Its function is as follows. Protein L1 is also a translational repressor protein, it controls the translation of the L11 operon by binding to its mRNA. In Finegoldia magna (strain ATCC 29328 / DSM 20472 / WAL 2508) (Peptostreptococcus magnus), this protein is Large ribosomal subunit protein uL1.